Reading from the N-terminus, the 802-residue chain is Aldehyde dehydrogenase family 16 member A1 (802 aa).

The segment at 513–554 (SLPSGPETGPSPAPPYGLFVRGRFQSPGTQSSRPIKDSSGKV) is disordered.

This sequence belongs to the aldehyde dehydrogenase family. Interacts with SPG21.

This chain is Aldehyde dehydrogenase family 16 member A1 (Aldh16a1), found in Rattus norvegicus (Rat).